We begin with the raw amino-acid sequence, 128 residues long: MKVHMLKSKIHNAIVTSGDLEYEGSITIDKELLEIADMMANEKVLVVNNNNGERFETYIIEGTRGLREIQLNGAAARCALPGDEIIIMAFAEMEPEEARNWQPMIVIVDRMNNPKRRHRVGKDNEYLG.

Catalysis depends on Ser25, which acts as the Schiff-base intermediate with substrate; via pyruvic acid. The residue at position 25 (Ser25) is a Pyruvic acid (Ser). Position 57 (Thr57) interacts with substrate. Tyr58 acts as the Proton donor in catalysis. Substrate is bound at residue 73 to 75 (GAA).

Belongs to the PanD family. In terms of assembly, heterooctamer of four alpha and four beta subunits. Pyruvate serves as cofactor. Post-translationally, is synthesized initially as an inactive proenzyme, which is activated by self-cleavage at a specific serine bond to produce a beta-subunit with a hydroxyl group at its C-terminus and an alpha-subunit with a pyruvoyl group at its N-terminus.

Its subcellular location is the cytoplasm. It catalyses the reaction L-aspartate + H(+) = beta-alanine + CO2. It functions in the pathway cofactor biosynthesis; (R)-pantothenate biosynthesis; beta-alanine from L-aspartate: step 1/1. Its function is as follows. Catalyzes the pyruvoyl-dependent decarboxylation of aspartate to produce beta-alanine. The sequence is that of Aspartate 1-decarboxylase from Chlorobaculum parvum (strain DSM 263 / NCIMB 8327) (Chlorobium vibrioforme subsp. thiosulfatophilum).